Reading from the N-terminus, the 156-residue chain is MSLLIDFIDETEEVKEEYMSLIREVLEKAAQMENIEDGAEVSVTFVDNERIREINRDYRDKDQPTDVISFAMEEMGEGEMEIVGAEMPRMLGDLIISIPRAKEQAEEYGHSFDRELGFLALHGFLHLLGYDHMTEEDEKEMFGRQKEILEAFGLGR.

Zn(2+)-binding residues include His-122, His-126, and His-132.

Belongs to the endoribonuclease YbeY family. It depends on Zn(2+) as a cofactor.

It localises to the cytoplasm. Its function is as follows. Single strand-specific metallo-endoribonuclease involved in late-stage 70S ribosome quality control and in maturation of the 3' terminus of the 16S rRNA. The sequence is that of Endoribonuclease YbeY from Bacillus cereus (strain ATCC 14579 / DSM 31 / CCUG 7414 / JCM 2152 / NBRC 15305 / NCIMB 9373 / NCTC 2599 / NRRL B-3711).